A 413-amino-acid polypeptide reads, in one-letter code: MPFMTASSPSLLQRLKSLSLVTQILIGLIAGIALALFAPEAAKGTAFIGKVFVSALKAVAPILVFVLVMASIANHKHGQETHIRPILFLYLLGTFAAAVVAVIASMMFPSHLVLSTDNIAVSAPGGISEVLQSLLLSVVDNPVSALMNANFIGILAWAIGMGVAIRHAGDTTREVLGDLSNGVTVIVRVVIRFAPLGIFGLVASTLATSGFGALIGYAHLLAVLLGCMLFVALVMNPLIVFWKLRRNPYPLTLQCLRESGITAFFTRSSAANIPVNLELSKRLGLHEDTYSVSIPLGATINMAGAAITITVLSLAAVHTLGIAVDIPTAILLSVVAAICACGASGVAGGSLLLIPLACSLFGIPSEIAMQVVAVGFIIGVLQDSAETALNSSTDVLFTAAACLGEEQKAQRPA.

The next 10 helical transmembrane spans lie at 18–38, 52–72, 86–106, 119–139, 145–165, 196–216, 221–241, 292–312, 320–340, and 360–380; these read LSLV…ALFA, FVSA…MASI, ILFL…IASM, IAVS…LSVV, ALMN…GVAI, LGIF…ALIG, LAVL…LIVF, VSIP…ITVL, LGIA…AICA, and LFGI…IIGV.

The protein belongs to the dicarboxylate/amino acid:cation symporter (DAACS) (TC 2.A.23) family.

It localises to the cell inner membrane. The enzyme catalyses L-serine(in) + Na(+)(in) = L-serine(out) + Na(+)(out). It carries out the reaction L-threonine(in) + Na(+)(in) = L-threonine(out) + Na(+)(out). Functionally, involved in the import of serine and threonine into the cell, with the concomitant import of sodium (symport system). In Pseudomonas fluorescens (strain Pf0-1), this protein is Serine/threonine transporter SstT.